The primary structure comprises 352 residues: MSILAEKLSSILKRYDELTALLSSAEVINDIKKLTELSKEQSSIEEISVASKEYLSVLENIKENKELLEDKELSELAKEELKILEIKKSELETTIKQLLIPKDPNDDKNIYLELRAGTGGDEAGIFVGDLFKAYCRYADLKKWKVEIVSSSENSVGGYKEIIALIKGKGVYSRLKFEAGTHRVQRVPETESQGRIHTSAITVAIMPEVDDVEISINPSDLKIEVFRAGGHGGQCVNTTDSAVRITHLPTNISVSMQDEKSQHKNKDKALKILKARLYEKQIEEQQLANAKDRKEQVGSGDRSERIRTYNYPQNRLSEHRINLTLYSLEEIMLSGNLDEVINPLIAHAQSQFE.

At glutamine 233 the chain carries N5-methylglutamine. Residues 288–309 (NAKDRKEQVGSGDRSERIRTYN) form a disordered region. Positions 289-306 (AKDRKEQVGSGDRSERIR) are enriched in basic and acidic residues.

This sequence belongs to the prokaryotic/mitochondrial release factor family. In terms of processing, methylated by PrmC. Methylation increases the termination efficiency of RF1.

It is found in the cytoplasm. Functionally, peptide chain release factor 1 directs the termination of translation in response to the peptide chain termination codons UAG and UAA. The chain is Peptide chain release factor 1 from Helicobacter acinonychis (strain Sheeba).